We begin with the raw amino-acid sequence, 144 residues long: Large ribosomal subunit protein uL13 (144 aa).

It belongs to the universal ribosomal protein uL13 family. Part of the 50S ribosomal subunit.

Functionally, this protein is one of the early assembly proteins of the 50S ribosomal subunit, although it is not seen to bind rRNA by itself. It is important during the early stages of 50S assembly. The protein is Large ribosomal subunit protein uL13 of Mycoplasmopsis pulmonis (strain UAB CTIP) (Mycoplasma pulmonis).